A 463-amino-acid chain; its full sequence is ATP-dependent protease ATPase subunit HslU (463 aa).

Residues Val-21, 63–68, Asp-276, Glu-341, and Arg-413 each bind ATP; that span reads GVGKTE.

The protein belongs to the ClpX chaperone family. HslU subfamily. In terms of assembly, a double ring-shaped homohexamer of HslV is capped on each side by a ring-shaped HslU homohexamer. The assembly of the HslU/HslV complex is dependent on binding of ATP.

The protein resides in the cytoplasm. Its function is as follows. ATPase subunit of a proteasome-like degradation complex; this subunit has chaperone activity. The binding of ATP and its subsequent hydrolysis by HslU are essential for unfolding of protein substrates subsequently hydrolyzed by HslV. HslU recognizes the N-terminal part of its protein substrates and unfolds these before they are guided to HslV for hydrolysis. This Thermotoga petrophila (strain ATCC BAA-488 / DSM 13995 / JCM 10881 / RKU-1) protein is ATP-dependent protease ATPase subunit HslU.